The primary structure comprises 102 residues: Large ribosomal subunit protein uL23c (102 aa).

The protein belongs to the universal ribosomal protein uL23 family. In terms of assembly, part of the 50S ribosomal subunit.

It localises to the plastid. The protein resides in the chloroplast. In terms of biological role, binds to 23S rRNA. In Trieres chinensis (Marine centric diatom), this protein is Large ribosomal subunit protein uL23c (rpl23).